Reading from the N-terminus, the 512-residue chain is Maturase K (512 aa).

Belongs to the intron maturase 2 family. MatK subfamily.

It localises to the plastid. The protein localises to the chloroplast. Its function is as follows. Usually encoded in the trnK tRNA gene intron. Probably assists in splicing its own and other chloroplast group II introns. This chain is Maturase K, found in Lemna minuta (Least duckweed).